The sequence spans 396 residues: MAGRAPQHALRVGCRAVPEALSKPAQQSRCLSSTVPRQATYPVVSFNKTSSPELKEALETLREKVILPTYLPPELRQKIFNKKYEKELAHDPVTIQIDGQPQRFSYINMLTDMPNTPKNIRAALLSMKNGGDFANLSGLLEGMHRANRKLPYWLSAQIVRKACKAGHLQLILNMVRDVKRTGFTLERHETVNELLFWIQRFAWKSDYSEPETRKALREVQEILDALEGDERHMSKDRKRQQALTRFPYHRDPQFLAARLNLTAELAARRAVTGQTSEQQLNSANDVKNLVKYAEQLVRLWPADKALLDMYTDEAYVARVDLRYLIKPQVHLRYASFTLQALKNAAKIVGQLGHGPLAAQLINRAAAVEAESQLAYAKVDDGMAGQKIYEMVVGGKK.

This sequence belongs to the mitochondrion-specific ribosomal protein mS27 family. Component of the mitochondrial small ribosomal subunit (mt-SSU). Mature N.crassa 74S mitochondrial ribosomes consist of a small (37S) and a large (54S) subunit. The 37S small subunit contains a 16S ribosomal RNA (16S mt-rRNA) and 32 different proteins. The 54S large subunit contains a 23S rRNA (23S mt-rRNA) and 42 different proteins.

It localises to the mitochondrion. Component of the mitochondrial ribosome (mitoribosome), a dedicated translation machinery responsible for the synthesis of mitochondrial genome-encoded proteins, including at least some of the essential transmembrane subunits of the mitochondrial respiratory chain. The mitoribosomes are attached to the mitochondrial inner membrane and translation products are cotranslationally integrated into the membrane. The polypeptide is Small ribosomal subunit protein mS27 (mrp13) (Neurospora crassa (strain ATCC 24698 / 74-OR23-1A / CBS 708.71 / DSM 1257 / FGSC 987)).